Consider the following 802-residue polypeptide: Copper-exporting P-type ATPase (802 aa).

HMA domains follow at residues 5–70 (KKTT…YGVA) and 72–138 (ETVE…YDAS). Positions 16, 19, 83, and 86 each coordinate Cu(+). The next 6 helical transmembrane spans lie at 161–181 (LIIS…HLFN), 192–212 (WFQF…FYVG), 224–244 (MDVL…YEMV), 256–276 (LYFE…YLEA), 411–431 (YFVP…ITLV), and 438–458 (PALV…LGLA). The 4-aspartylphosphate intermediate role is filled by Asp495. Mg(2+)-binding residues include Asp690 and Asp694. 2 helical membrane-spanning segments follow: residues 748-767 (LFWA…LGLL) and 771-790 (VAGA…ALRL).

Belongs to the cation transport ATPase (P-type) (TC 3.A.3) family. Type IB subfamily.

Its subcellular location is the cell membrane. The catalysed reaction is Cu(+)(in) + ATP + H2O = Cu(+)(out) + ADP + phosphate + H(+). Its function is as follows. Involved in copper export. The polypeptide is Copper-exporting P-type ATPase (copA) (Staphylococcus aureus (strain MRSA252)).